A 292-amino-acid polypeptide reads, in one-letter code: 4-hydroxy-tetrahydrodipicolinate synthase (292 aa).

A pyruvate-binding site is contributed by threonine 45. Tyrosine 133 acts as the Proton donor/acceptor in catalysis. Lysine 161 functions as the Schiff-base intermediate with substrate in the catalytic mechanism. Isoleucine 203 is a binding site for pyruvate.

This sequence belongs to the DapA family. Homodimer.

It is found in the cytoplasm. It catalyses the reaction L-aspartate 4-semialdehyde + pyruvate = (2S,4S)-4-hydroxy-2,3,4,5-tetrahydrodipicolinate + H2O + H(+). The protein operates within amino-acid biosynthesis; L-lysine biosynthesis via DAP pathway; (S)-tetrahydrodipicolinate from L-aspartate: step 3/4. In terms of biological role, catalyzes the condensation of (S)-aspartate-beta-semialdehyde [(S)-ASA] and pyruvate to 4-hydroxy-tetrahydrodipicolinate (HTPA). This chain is 4-hydroxy-tetrahydrodipicolinate synthase, found in Ectopseudomonas mendocina (strain ymp) (Pseudomonas mendocina).